A 462-amino-acid polypeptide reads, in one-letter code: UDP-N-acetylmuramoylalanine--D-glutamate ligase (462 aa).

An ATP-binding site is contributed by 117–123 (GTNGKTT).

The protein belongs to the MurCDEF family.

It localises to the cytoplasm. The catalysed reaction is UDP-N-acetyl-alpha-D-muramoyl-L-alanine + D-glutamate + ATP = UDP-N-acetyl-alpha-D-muramoyl-L-alanyl-D-glutamate + ADP + phosphate + H(+). Its pathway is cell wall biogenesis; peptidoglycan biosynthesis. Cell wall formation. Catalyzes the addition of glutamate to the nucleotide precursor UDP-N-acetylmuramoyl-L-alanine (UMA). This chain is UDP-N-acetylmuramoylalanine--D-glutamate ligase, found in Parasynechococcus marenigrum (strain WH8102).